Reading from the N-terminus, the 242-residue chain is Ribosomal RNA small subunit methyltransferase G (242 aa).

Residues Gly-79, 130–131 (VE), and Gln-149 each bind S-adenosyl-L-methionine.

The protein belongs to the methyltransferase superfamily. RNA methyltransferase RsmG family.

Its subcellular location is the cytoplasm. Functionally, specifically methylates the N7 position of a guanine in 16S rRNA. This chain is Ribosomal RNA small subunit methyltransferase G, found in Mycoplasmoides gallisepticum (strain R(low / passage 15 / clone 2)) (Mycoplasma gallisepticum).